Consider the following 819-residue polypeptide: Lon protease (819 aa).

Positions 1 to 36 (MDSTTNSDSPILDPNPEDVEKLLDESEEESEDQSTE) are disordered. Residues 43-240 (LFILPLNKRP…KALILLKKEL (198 aa)) form the Lon N-terminal domain. Residue 393 to 400 (GPPGVGKT) participates in ATP binding. The Lon proteolytic domain occupies 635-817 (STPVGVATGL…DDVLKVAFPK (183 aa)). Active-site residues include Ser-723 and Lys-766.

It belongs to the peptidase S16 family. Homohexamer. Organized in a ring with a central cavity.

It localises to the cytoplasm. The enzyme catalyses Hydrolysis of proteins in presence of ATP.. Its function is as follows. ATP-dependent serine protease that mediates the selective degradation of mutant and abnormal proteins as well as certain short-lived regulatory proteins. Required for cellular homeostasis and for survival from DNA damage and developmental changes induced by stress. Degrades polypeptides processively to yield small peptide fragments that are 5 to 10 amino acids long. Binds to DNA in a double-stranded, site-specific manner. This chain is Lon protease, found in Chlamydia pneumoniae (Chlamydophila pneumoniae).